The sequence spans 633 residues: Leucine-rich repeat and IQ domain-containing protein 3 (633 aa).

LRR repeat units follow at residues 51 to 72, 73 to 94, and 98 to 119; these read SLRV…QSCK, KLIK…NFWS, and NLKL…CVLS. Residues 132 to 179 form the LRRCT domain; the sequence is CPVSLKKGYRHVLVNSIWPLKALDHHVISDEEIIQNWRLPERFKTFSP. The IQ domain occupies 215–244; that stretch reads HNSPVLIIQRWIRGFIVRKHLSPYFKHKKH. Residues 324-343 are disordered; it reads SKQPRHHIHKGQKAMKAESE. Basic residues predominate over residues 325 to 336; the sequence is KQPRHHIHKGQK. Residues 556 to 617 are a coiled coil; the sequence is IEKWEEQKYK…AKVEYIKTFY (62 aa).

This chain is Leucine-rich repeat and IQ domain-containing protein 3 (Lrriq3), found in Mus musculus (Mouse).